Here is a 129-residue protein sequence, read N- to C-terminus: Cocaine- and amphetamine-regulated transcript protein (129 aa).

A signal peptide spans 1–27; sequence MESSRLRLLPVLGAALLLLLPLLGAGA. Tyrosine 41 is subject to Phosphotyrosine. Serine 48 is subject to Phosphoserine. 3 disulfides stabilise this stretch: cysteine 95–cysteine 113, cysteine 101–cysteine 121, and cysteine 115–cysteine 128.

Belongs to the CART family. Neuroendocrine tissues. Predominantly expressed in the hypothalamus, pituitary, and longitudinal muscle-myenteric plexus. Abundant expression is also seen in the midbrain/thalamus and eye. A lower level expression is seen in the other brain regions and adrenal.

Its subcellular location is the secreted. Its function is as follows. Satiety factor closely associated with the actions of leptin and neuropeptide y; this anorectic peptide inhibits both normal and starvation-induced feeding and completely blocks the feeding response induced by neuropeptide Y and regulated by leptin in the hypothalamus. The polypeptide is Cocaine- and amphetamine-regulated transcript protein (Cartpt) (Rattus norvegicus (Rat)).